Here is a 237-residue protein sequence, read N- to C-terminus: MNIKDVGVIIAKKPLKENTFIITVFTKNHGLYSGVVKESSKKSKFIYQEGNIVDFLWQARLHEHIGMAKCELIKSYTGYFIINKAKLYAFNSVISLIKELFHEREEHSNFFSFLINYLDNLSKNFCFRDYINFELALLAETGYKLDLTKCGVTHVTTDLNYVSPKSARALSYEVGKPYKDKLLILPKFLLSDDSEITLEEKRQASTLTNYFFNRYLFHNNRQAEARQIFMEYILNNS.

Belongs to the RecO family.

Its function is as follows. Involved in DNA repair and RecF pathway recombination. The protein is DNA repair protein RecO of Rickettsia felis (strain ATCC VR-1525 / URRWXCal2) (Rickettsia azadi).